The primary structure comprises 242 residues: Uridylate kinase (242 aa).

16–19 (KVSG) provides a ligand contact to ATP. UMP is bound at residue G58. G59 and R63 together coordinate ATP. Residues D78 and 139–146 (TGNPFCTT) contribute to the UMP site. ATP contacts are provided by T166, Q167, Y172, and D175.

The protein belongs to the UMP kinase family. As to quaternary structure, homohexamer.

Its subcellular location is the cytoplasm. It catalyses the reaction UMP + ATP = UDP + ADP. Its pathway is pyrimidine metabolism; CTP biosynthesis via de novo pathway; UDP from UMP (UMPK route): step 1/1. Its activity is regulated as follows. Inhibited by UTP. Functionally, catalyzes the reversible phosphorylation of UMP to UDP. This chain is Uridylate kinase, found in Rickettsia canadensis (strain McKiel).